Consider the following 67-residue polypeptide: Medusin-S1 (67 aa).

Positions 1–22 (MSFLKKSLFLVLFLGFVSLSIC) are cleaved as a signal peptide. Positions 23 to 48 (EEEKRETEEKENEQEDDREERSEEKR) are excised as a propeptide. The disordered stretch occupies residues 26–47 (KRETEEKENEQEDDREERSEEK). Acidic residues predominate over residues 31–40 (EKENEQEDDR). The residue at position 66 (leucine 66) is a Leucine amide.

This sequence belongs to the frog skin active peptide (FSAP) family. Medusin subfamily. As to expression, expressed by the skin glands.

Its subcellular location is the secreted. The protein localises to the target cell membrane. Functionally, antibacterial peptide with moderate activity against the Gram-positive bacteria (S.aureus ATCC 25923, MIC=25 uM), but not against all other bacteria (both Gram-positive and Gram-negative) tested. Does not show activity against fungi, and against Leishmania species. It adopts an alpha-helical structure with very low amphipathicity in membrane environments. The chain is Medusin-S1 from Phyllomedusa sauvagei (Sauvage's leaf frog).